Here is a 187-residue protein sequence, read N- to C-terminus: UPF0301 protein Cpar_0662 (187 aa).

Belongs to the UPF0301 (AlgH) family.

This is UPF0301 protein Cpar_0662 from Chlorobaculum parvum (strain DSM 263 / NCIMB 8327) (Chlorobium vibrioforme subsp. thiosulfatophilum).